Here is a 262-residue protein sequence, read N- to C-terminus: Hemin import ATP-binding protein HmuV (262 aa).

One can recognise an ABC transporter domain in the interval 3-244; that stretch reads LQARNLTLAR…DHMRRVYGIE (242 aa). 35-42 lines the ATP pocket; that stretch reads GANGAGKS.

Belongs to the ABC transporter superfamily. Heme (hemin) importer (TC 3.A.1.14.5) family. The complex is composed of two ATP-binding proteins (HmuV), two transmembrane proteins (HmuU) and a solute-binding protein (HmuT).

It is found in the cell inner membrane. In terms of biological role, part of the ABC transporter complex HmuTUV involved in hemin import. Responsible for energy coupling to the transport system. The protein is Hemin import ATP-binding protein HmuV of Bordetella parapertussis (strain 12822 / ATCC BAA-587 / NCTC 13253).